Here is a 365-residue protein sequence, read N- to C-terminus: 25S rRNA (uridine(2843)-N(3))-methyltransferase (365 aa).

This sequence belongs to the class I-like SAM-binding methyltransferase superfamily.

The protein localises to the cytoplasm. Its subcellular location is the nucleus. The catalysed reaction is uridine(2843) in 25S rRNA + S-adenosyl-L-methionine = N(3)-methyluridine(2843) in 25S rRNA + S-adenosyl-L-homocysteine + H(+). Its function is as follows. S-adenosyl-L-methionine-dependent methyltransferase that specifically methylates the N(3) position of uridine 2843 (m3U2843) in 25S rRNA. This Saccharomyces cerevisiae (strain ATCC 204508 / S288c) (Baker's yeast) protein is 25S rRNA (uridine(2843)-N(3))-methyltransferase (BMT6).